Reading from the N-terminus, the 252-residue chain is 2-succinyl-6-hydroxy-2,4-cyclohexadiene-1-carboxylate synthase (252 aa).

Belongs to the AB hydrolase superfamily. MenH family. Monomer.

The catalysed reaction is 5-enolpyruvoyl-6-hydroxy-2-succinyl-cyclohex-3-ene-1-carboxylate = (1R,6R)-6-hydroxy-2-succinyl-cyclohexa-2,4-diene-1-carboxylate + pyruvate. The protein operates within quinol/quinone metabolism; 1,4-dihydroxy-2-naphthoate biosynthesis; 1,4-dihydroxy-2-naphthoate from chorismate: step 3/7. It functions in the pathway quinol/quinone metabolism; menaquinone biosynthesis. In terms of biological role, catalyzes a proton abstraction reaction that results in 2,5-elimination of pyruvate from 2-succinyl-5-enolpyruvyl-6-hydroxy-3-cyclohexene-1-carboxylate (SEPHCHC) and the formation of 2-succinyl-6-hydroxy-2,4-cyclohexadiene-1-carboxylate (SHCHC). The sequence is that of 2-succinyl-6-hydroxy-2,4-cyclohexadiene-1-carboxylate synthase from Klebsiella pneumoniae subsp. pneumoniae (strain ATCC 700721 / MGH 78578).